A 749-amino-acid polypeptide reads, in one-letter code: MSGNHTPSASGPFSALTPSIWPQEILAKSSQKEDSSEPEICYDEFGFRVDKEGSEPGCSQMAGTPLVEDPPQRLRWQAHLEFTHNHDVGDLTWDKIAVSLPRSEKLRSLVLAGIPHGMRPQLWMRLSGALQKKKNSELSYREIVKNSSNDETIAAKQIEKDLLRTMPSNACFANVNSIGVPRLRRVLRALAWLYPEIGYCQGTGMVAACLLLFLEEEDAFWMMCAIIEDLLPASYFSTTLLGVQTDQRVLRHLIVQYLPRLDKLLQEHDIELSLITLHWFLTAFASVVHIRLLLRIWDLFFYEGSLVLFQTTLGMLRLKEEELIQSENSASIFNTLSDIPAQMDDAELLLGEAMQLAGSLTDVAVETQRRKHLAYLIADQGQTLGTSTTTSLSQVVRRRTQRRKSGITSLLFGEDDLEALKAKNIKQTELVADLREAILRVARHFQCTDPKNCSVELTPDYSMESHQRDHENYVACLRSHRRRAKALLDFERHDDDELGFRKNDIITIISQKDEHCWVGELNGLRGWFPAKFVEVLDERSKEYSIAGDDSVTEGVTDLVRGTLCPALKALFEHGLKKPSLLGGACHPWLFIEEAAGREVERDFDSVYSRLVLCKTYRLDEDGKVLTPEELLYRAVQSVNVTHDAAHAQMDVKLRSLICVGLNEQVLHLWLEVLCSSLPTVEKWYQPWSFLRSPGWVQIKCELRVLCCFAFSLSQDWELPAKREEEKQPLKEGVQDMLVKHHLFSWDIDG.

The 192-residue stretch at 113–304 (GIPHGMRPQL…RIWDLFFYEG (192 aa)) folds into the Rab-GAP TBC domain. Ser-405 carries the post-translational modification Phosphoserine. Positions 414 to 438 (EDDLEALKAKNIKQTELVADLREAI) form a coiled coil. The 60-residue stretch at 479–538 (SHRRRAKALLDFERHDDDELGFRKNDIITIISQKDEHCWVGELNGLRGWFPAKFVEVLDE) folds into the SH3 domain. In terms of domain architecture, RUN spans 554–717 (GVTDLVRGTL…FAFSLSQDWE (164 aa)).

The protein belongs to the small G protein signaling modulator family. As to quaternary structure, interacts with GJA1. Interaction with GJA1 induces its degradation. Interacts (via RUN domain) with NF2 (via C-terminus). Interacts with RAB3A, RAB4A, RAB5A, RAB8A, RAB11A, RAP1A, RAP1B, RAP2A, RAP2B and PDCD6I. No interaction with RAB27A. No interaction with GJB1 or GJD2. In terms of tissue distribution, expressed in brain, liver, kidney and testis. Moderately expressed in heart, very weakly in lung and muscle. Not expressed in spleen.

It is found in the cytoplasm. Functionally, may play a cooperative role in NF2-mediated growth suppression of cells. May act as a modulator of small G protein RAB- and RAP-mediated neuronal signal transduction and vesicular transportation pathways. The protein is Small G protein signaling modulator 3 of Rattus norvegicus (Rat).